The primary structure comprises 321 residues: uncharacterized protein (321 aa).

The HTH lacI-type domain occupies 1-56 (MANIKDIAEKAGVSVTTVSRVINNHPYVSEDKRKRVFEAMESLEYTRNIHAVHLSK). The segment at residues 4 to 23 (IKDIAEKAGVSVTTVSRVIN) is a DNA-binding region (H-T-H motif).

This is an uncharacterized protein from Bacillus subtilis (strain 168).